The following is a 337-amino-acid chain: Holliday junction branch migration complex subunit RuvB (337 aa).

A large ATPase domain (RuvB-L) region spans residues 4 to 186 (ADRLIAADNP…FGIVQRLEYY (183 aa)). Residues I25, R26, G67, K70, T71, T72, 133–135 (EDY), R176, Y186, and R223 contribute to the ATP site. T71 contacts Mg(2+). Residues 187 to 257 (KVDDLQYIVQ…IADKALNMLD (71 aa)) are small ATPAse domain (RuvB-S). Residues 260 to 337 (VCGFDYMDRK…LHFGIDRPDK (78 aa)) are head domain (RuvB-H). Residues R315 and R320 each contribute to the DNA site.

It belongs to the RuvB family. In terms of assembly, homohexamer. Forms an RuvA(8)-RuvB(12)-Holliday junction (HJ) complex. HJ DNA is sandwiched between 2 RuvA tetramers; dsDNA enters through RuvA and exits via RuvB. An RuvB hexamer assembles on each DNA strand where it exits the tetramer. Each RuvB hexamer is contacted by two RuvA subunits (via domain III) on 2 adjacent RuvB subunits; this complex drives branch migration. In the full resolvosome a probable DNA-RuvA(4)-RuvB(12)-RuvC(2) complex forms which resolves the HJ.

It is found in the cytoplasm. The catalysed reaction is ATP + H2O = ADP + phosphate + H(+). The RuvA-RuvB-RuvC complex processes Holliday junction (HJ) DNA during genetic recombination and DNA repair, while the RuvA-RuvB complex plays an important role in the rescue of blocked DNA replication forks via replication fork reversal (RFR). RuvA specifically binds to HJ cruciform DNA, conferring on it an open structure. The RuvB hexamer acts as an ATP-dependent pump, pulling dsDNA into and through the RuvAB complex. RuvB forms 2 homohexamers on either side of HJ DNA bound by 1 or 2 RuvA tetramers; 4 subunits per hexamer contact DNA at a time. Coordinated motions by a converter formed by DNA-disengaged RuvB subunits stimulates ATP hydrolysis and nucleotide exchange. Immobilization of the converter enables RuvB to convert the ATP-contained energy into a lever motion, pulling 2 nucleotides of DNA out of the RuvA tetramer per ATP hydrolyzed, thus driving DNA branch migration. The RuvB motors rotate together with the DNA substrate, which together with the progressing nucleotide cycle form the mechanistic basis for DNA recombination by continuous HJ branch migration. Branch migration allows RuvC to scan DNA until it finds its consensus sequence, where it cleaves and resolves cruciform DNA. The protein is Holliday junction branch migration complex subunit RuvB of Aliivibrio salmonicida (strain LFI1238) (Vibrio salmonicida (strain LFI1238)).